We begin with the raw amino-acid sequence, 365 residues long: MSSSVEQKKGPTRQRKCGFCKSNRDKECGQLLISENQKVAAHHKCMLFSSALVSSHSDNESLGGFSIEDVQKEIKRGTKLMCSLCHCPGATIGCDVKTCHRTYHYHCALHDKAQIREKPSQGIYMVYCRKHKKTAHNSEADLEESFNEHELEPSSPKSKKKSRKGRPRKTNFKGLSEDTRSTSSHGTDEMESSSYRDRSPHRSSPSDTRPKCGFCHVGEEENEARGKLHIFNAKKAAAHYKCMLFSSGTVQLTTTSRAEFGDFDIKTVLQEIKRGKRMKCTLCSQPGATIGCEIKACVKTYHYHCGVQDKAKYIENMSRGIYKLYCKNHSGNDERDEEDEERESKSRGKVEIDQQQLTQQQLNGN.

The residue at position 2 (Ser2) is an N-acetylserine. 2 consecutive short sequence motifs (nuclear localization signal) follow at residues 13 to 16 and 129 to 133; these read RQRK and RKHKK. The segment at 14 to 52 adopts a C2HC pre-PHD-type 1 zinc-finger fold; the sequence is QRKCGFCKSNRDKECGQLLISENQKVAAHHKCMLFSSAL. Residues 14 to 132 form an extended PHD1 domain (ePHD1) region; the sequence is QRKCGFCKSN…IYMVYCRKHK (119 aa). The PHD-type 1 zinc finger occupies 80 to 132; it reads LMCSLCHCPGATIGCDVKTCHRTYHYHCALHDKAQIREKPSQGIYMVYCRKHK. A phosphoserine mark is found at Ser138, Ser145, and Ser155. The interval 139–211 is disordered; that stretch reads EADLEESFNE…RSSPSDTRPK (73 aa). A Nucleolar localization signal motif is present at residues 157 to 169; sequence KSKKKSRKGRPRK. Over residues 157–171 the composition is skewed to basic residues; it reads KSKKKSRKGRPRKTN. A Glycyl lysine isopeptide (Lys-Gly) (interchain with G-Cter in SUMO2) cross-link involves residue Lys173. Residues Ser183 and Ser199 each carry the phosphoserine modification. Residues 209-249 form a C2HC pre-PHD-type 2 zinc finger; that stretch reads RPKCGFCHVGEEENEARGKLHIFNAKKAAAHYKCMLFSSGT. Residues 209–330 form an extended PHD2 domain (ePHD2) region; the sequence is RPKCGFCHVG…IYKLYCKNHS (122 aa). Residue Lys227 forms a Glycyl lysine isopeptide (Lys-Gly) (interchain with G-Cter in SUMO2) linkage. A PHD-type 2 zinc finger spans residues 278-330; sequence MKCTLCSQPGATIGCEIKACVKTYHYHCGVQDKAKYIENMSRGIYKLYCKNHS. A disordered region spans residues 330-365; the sequence is SGNDERDEEDEERESKSRGKVEIDQQQLTQQQLNGN. Residues 342-352 show a composition bias toward basic and acidic residues; the sequence is RESKSRGKVEI. Over residues 354–365 the composition is skewed to low complexity; it reads QQQLTQQQLNGN. Thr358 carries the post-translational modification Phosphothreonine.

In terms of assembly, interacts with UBTF. Interacts with the NuRD complex component RBBP4 (via the nucleolar localization motif), the interaction mediates transcriptional repression activity.

The protein resides in the nucleus. It is found in the nucleolus. It localises to the chromosome. Its subcellular location is the centromere. The protein localises to the kinetochore. In terms of biological role, transcriptional regulator that associates with ribosomal RNA promoters and suppresses ribosomal RNA (rRNA) transcription. This Pongo abelii (Sumatran orangutan) protein is PHD finger protein 6 (PHF6).